Here is a 258-residue protein sequence, read N- to C-terminus: Glucanase inhibitor protein 1 (258 aa).

The signal sequence occupies residues 1-19 (MRVVPTLAAASLALGAVAG). In terms of domain architecture, Peptidase S1 spans 27-254 (ILGGGEVPIG…AIEWITSVTK (228 aa)). A disulfide bridge links C54 with C70. N-linked (GlcNAc...) asparagine glycosylation is found at N87, N102, N107, N157, and N185. Intrachain disulfides connect C177-C189 and C199-C230.

This sequence belongs to the peptidase S1 family. As to quaternary structure, forms an apoplastic complex with host endoglucanases in tomato leaves during P.infestans infection.

It is found in the secreted. In terms of biological role, secreted effector that suppresses host plant glucan elicitor-mediated defense responses. Targets host endoglucanases and inhibits the endoglucanase-mediated release of elicitor-active glucan oligosaccharides from P.infestans cell walls. The polypeptide is Glucanase inhibitor protein 1 (Phytophthora infestans (Potato late blight agent)).